The primary structure comprises 489 residues: Rhamnulokinase (489 aa).

13 to 17 lines the ATP pocket; the sequence is ASSGR. The cysteines at positions 68 and 222 are disulfide-linked. Substrate contacts are provided by residues Gly83 and 236 to 238; that span reads HDT. The active-site Proton acceptor is the Asp237. Residue Thr259 coordinates ATP. Residue Asn296 participates in substrate binding. Gln304 serves as a coordination point for ATP. Cys353 and Cys370 are oxidised to a cystine. Gly402 contributes to the ATP binding site. Residues Cys413 and Cys417 are joined by a disulfide bond.

It belongs to the rhamnulokinase family. As to quaternary structure, monomer. Mg(2+) is required as a cofactor.

It carries out the reaction L-rhamnulose + ATP = L-rhamnulose 1-phosphate + ADP + H(+). The protein operates within carbohydrate degradation; L-rhamnose degradation; glycerone phosphate from L-rhamnose: step 2/3. Its function is as follows. Involved in the catabolism of L-rhamnose (6-deoxy-L-mannose). Catalyzes the transfer of the gamma-phosphate group from ATP to the 1-hydroxyl group of L-rhamnulose to yield L-rhamnulose 1-phosphate. This Escherichia coli O9:H4 (strain HS) protein is Rhamnulokinase.